A 325-amino-acid chain; its full sequence is Acetyl-coenzyme A carboxylase carboxyl transferase subunit alpha (325 aa).

The CoA carboxyltransferase C-terminal domain occupies E35–Q292.

Belongs to the AccA family. In terms of assembly, acetyl-CoA carboxylase is a heterohexamer composed of biotin carboxyl carrier protein (AccB), biotin carboxylase (AccC) and two subunits each of ACCase subunit alpha (AccA) and ACCase subunit beta (AccD).

The protein localises to the cytoplasm. It carries out the reaction N(6)-carboxybiotinyl-L-lysyl-[protein] + acetyl-CoA = N(6)-biotinyl-L-lysyl-[protein] + malonyl-CoA. It functions in the pathway lipid metabolism; malonyl-CoA biosynthesis; malonyl-CoA from acetyl-CoA: step 1/1. Functionally, component of the acetyl coenzyme A carboxylase (ACC) complex. First, biotin carboxylase catalyzes the carboxylation of biotin on its carrier protein (BCCP) and then the CO(2) group is transferred by the carboxyltransferase to acetyl-CoA to form malonyl-CoA. This is Acetyl-coenzyme A carboxylase carboxyl transferase subunit alpha from Geobacillus kaustophilus (strain HTA426).